An 835-amino-acid chain; its full sequence is Cap-specific mRNA (nucleoside-2'-O-)-methyltransferase 1 (835 aa).

Positions 2 to 19 match the Bipartite nuclear localization signal motif; the sequence is RRRNDPECTAPIKKQKKR. Positions 24–68 are disordered; that stretch reads ALNLSAASGDEPPSSVNHAAKASTTSLSGSDSETEGKQHGSDSFD. Phosphoserine is present on residues Ser28, Ser31, Ser53, Ser66, and Ser91. Positions 37-54 are enriched in polar residues; it reads SSVNHAAKASTTSLSGSD. Residues 57–68 show a composition bias toward basic and acidic residues; it reads TEGKQHGSDSFD. Positions 87–133 constitute a G-patch domain; that stretch reads YNSVSQKLMAKMGFREGEGLGKYSQGRKDIVEASNQKGRRGLGLTLQ. The residue at position 108 (Lys108) is an N6-acetyllysine. Residues 203 to 207 and Arg218 contribute to the substrate site; that span reads KSVFD. The RrmJ-type SAM-dependent 2'-O-MTase domain occupies 231–450; it reads FFLNRAAMKM…ERYVVCKGLK (220 aa). S-adenosyl-L-methionine is bound at residue Asn234. The active site involves Lys239. Residues 277 to 283 and 335 to 336 each bind S-adenosyl-L-methionine; these read CAGPGGF and DI. Asp364 is an active-site residue. 374–376 lines the substrate pocket; it reads NLQ. Lys404 functions as the Proton acceptor in the catalytic mechanism. Residue Asn439 coordinates substrate. The tract at residues 727–835 is interaction with POLR2A; sequence SSGTPKLSYT…VLSFIQTHSA (109 aa). One can recognise a WW domain in the interval 752-786; sequence RTVNEPWTMGFSKSFKRKFFYNKKTKISTFDLPAD.

Interacts with POLR2A (via C-terminus).

It is found in the nucleus. It carries out the reaction a 5'-end (N(7)-methyl 5'-triphosphoguanosine)-ribonucleoside in mRNA + S-adenosyl-L-methionine = a 5'-end (N(7)-methyl 5'-triphosphoguanosine)-(2'-O-methyl-ribonucleoside) in mRNA + S-adenosyl-L-homocysteine + H(+). Functionally, S-adenosyl-L-methionine-dependent methyltransferase that mediates mRNA cap1 2'-O-ribose methylation to the 5'-cap structure of mRNAs. Methylates the ribose of the first nucleotide of a m(7)GpppG-capped mRNA and small nuclear RNA (snRNA) to produce m(7)GpppRm (cap1). Displays a preference for cap0 transcripts. Cap1 modification is linked to higher levels of translation. May be involved in the interferon response pathway. This chain is Cap-specific mRNA (nucleoside-2'-O-)-methyltransferase 1 (CMTR1), found in Ailuropoda melanoleuca (Giant panda).